The primary structure comprises 93 residues: DNA-directed RNA polymerase subunit omega (93 aa).

This sequence belongs to the RNA polymerase subunit omega family. In terms of assembly, the RNAP catalytic core consists of 2 alpha, 1 beta, 1 beta' and 1 omega subunit. When a sigma factor is associated with the core the holoenzyme is formed, which can initiate transcription.

The enzyme catalyses RNA(n) + a ribonucleoside 5'-triphosphate = RNA(n+1) + diphosphate. Its function is as follows. Promotes RNA polymerase assembly. Latches the N- and C-terminal regions of the beta' subunit thereby facilitating its interaction with the beta and alpha subunits. In Shewanella loihica (strain ATCC BAA-1088 / PV-4), this protein is DNA-directed RNA polymerase subunit omega.